Reading from the N-terminus, the 123-residue chain is Homeobox protein CDX-1 (123 aa).

Residues 5–64 (KDKYRVVYTDHQRLELEKEFHYSRYITIRRKSELAANLGLTERQVKIWFQNRRAKERKVN) constitute a DNA-binding region (homeobox). The tract at residues 8 to 29 (YRVVYTDHQRLELEKEFHYSRY) is interaction with DNA. Residues 47-58 (RQVKIWFQNRRA) are interaction with 5-mCpG DNA. The segment covering 57 to 68 (RAKERKVNKKKQ) has biased composition (basic residues). The tract at residues 57–123 (RAKERKVNKK…PVPVKEEFLP (67 aa)) is disordered.

Belongs to the Caudal homeobox family. Intestinal epithelium.

It is found in the nucleus. Plays a role in transcriptional regulation. Involved in activated KRAS-mediated transcriptional activation of PRKD1 in colorectal cancer (CRC) cells. Binds to the PRKD1 promoter in colorectal cancer (CRC) cells. Could play a role in the terminal differentiation of the intestine. Binds preferentially to methylated DNA. This chain is Homeobox protein CDX-1 (Cdx1), found in Rattus norvegicus (Rat).